A 182-amino-acid chain; its full sequence is Protein GrpE (182 aa).

The tract at residues 1-35 (MTQENQTPPPEQENLAADPAVETTAETPAVKTPEQ) is disordered.

The protein belongs to the GrpE family. Homodimer.

The protein localises to the cytoplasm. Its function is as follows. Participates actively in the response to hyperosmotic and heat shock by preventing the aggregation of stress-denatured proteins, in association with DnaK and GrpE. It is the nucleotide exchange factor for DnaK and may function as a thermosensor. Unfolded proteins bind initially to DnaJ; upon interaction with the DnaJ-bound protein, DnaK hydrolyzes its bound ATP, resulting in the formation of a stable complex. GrpE releases ADP from DnaK; ATP binding to DnaK triggers the release of the substrate protein, thus completing the reaction cycle. Several rounds of ATP-dependent interactions between DnaJ, DnaK and GrpE are required for fully efficient folding. This chain is Protein GrpE, found in Polynucleobacter necessarius subsp. necessarius (strain STIR1).